An 892-amino-acid chain; its full sequence is Alanine--tRNA ligase (892 aa).

Zn(2+)-binding residues include His577, His581, Cys680, and His684.

The protein belongs to the class-II aminoacyl-tRNA synthetase family. Zn(2+) is required as a cofactor.

The protein resides in the cytoplasm. It catalyses the reaction tRNA(Ala) + L-alanine + ATP = L-alanyl-tRNA(Ala) + AMP + diphosphate. Functionally, catalyzes the attachment of alanine to tRNA(Ala) in a two-step reaction: alanine is first activated by ATP to form Ala-AMP and then transferred to the acceptor end of tRNA(Ala). Also edits incorrectly charged Ser-tRNA(Ala) and Gly-tRNA(Ala) via its editing domain. This Arthrobacter sp. (strain FB24) protein is Alanine--tRNA ligase.